The chain runs to 2497 residues: Integrator complex subunit 1 homolog (2497 aa).

A compositionally biased stretch (basic residues) spans 1 to 10; the sequence is MMLNKIKRSK. 6 disordered regions span residues 1–151, 300–337, 946–965, 1028–1108, 1234–1292, and 1572–1604; these read MMLN…NNNI, QPQP…IKKS, QQQQ…QQPT, TTTT…TSSS, INNN…NQKS, and NNNN…NNIT. Composition is skewed to low complexity over residues 37–46, 60–151, 305–333, 946–963, and 1028–1058; these read SDNNNNNSND, NNSI…NNNI, QQQQ…QPQQ, QQQQ…QQQQ, and TTTT…SSSL. A compositionally biased stretch (polar residues) spans 1075–1091; sequence SGLSGSSNGINQSSDSI. Composition is skewed to low complexity over residues 1097 to 1108, 1234 to 1265, 1272 to 1289, and 1572 to 1602; these read STSPTTTTTSSS, INNN…NINK, HSNS…NKNN, and NNNN…NNNN. Residues 1645–1675 adopt a coiled-coil conformation; it reads RILKNTTQQKQQKQQQKESVQKSIQSLSKLI. Residues 2084–2115 show a composition bias toward low complexity; that stretch reads QQQQQQQQQQQQQQKQQSNNSNNINNNNNNNN. 2 disordered regions span residues 2084 to 2123 and 2329 to 2350; these read QQQQ…QKSK and NNNN…NNNN.

It belongs to the Integrator subunit 1 family. Component of the Integrator complex. The core complex associates with protein phosphatase 2A subunits to form the Integrator-PP2A (INTAC) complex.

It localises to the nucleus. Its function is as follows. Component of the integrator complex, a multiprotein complex that terminates RNA polymerase II (Pol II) transcription in the promoter-proximal region of genes. The integrator complex provides a quality checkpoint during transcription elongation by driving premature transcription termination of transcripts that are unfavorably configured for transcriptional elongation: the complex terminates transcription by (1) catalyzing dephosphorylation of the C-terminal domain (CTD) of Pol II subunit polr2a, (2) degrading the exiting nascent RNA transcript via endonuclease activity and (3) promoting the release of Pol II from bound DNA. The integrator complex is also involved in terminating the synthesis of non-coding Pol II transcripts, such as enhancer RNAs (eRNAs), small nuclear RNAs (snRNAs), telomerase RNAs and long non-coding RNAs (lncRNAs). In Dictyostelium discoideum (Social amoeba), this protein is Integrator complex subunit 1 homolog (ints1).